We begin with the raw amino-acid sequence, 72 residues long: Conotoxin VnMKLT2-021 (72 aa).

The signal sequence occupies residues 1-22 (MKLTCVLIVAVLFLTACQLTTA). Residues 23–45 (ASYARSEREHPDLGSSDQNSKLT) constitute a propeptide that is removed on maturation. The interval 25-44 (YARSEREHPDLGSSDQNSKL) is disordered. Intrachain disulfides connect Cys-48–Cys-62, Cys-55–Cys-66, and Cys-61–Cys-71.

Belongs to the conotoxin O1 superfamily. Expressed by the venom duct.

The protein resides in the secreted. The polypeptide is Conotoxin VnMKLT2-021 (Conus ventricosus (Mediterranean cone)).